A 499-amino-acid polypeptide reads, in one-letter code: 2-isopropylmalate synthase (499 aa).

The Pyruvate carboxyltransferase domain occupies 5 to 267 (IKIFDTTLRD…ETGINLGEIA (263 aa)). Residues D14, H202, H204, and N238 each contribute to the Mn(2+) site. The tract at residues 391-499 (SVEVLHVISG…YLSALNRIRR (109 aa)) is regulatory domain.

It belongs to the alpha-IPM synthase/homocitrate synthase family. LeuA type 1 subfamily. The cofactor is Mn(2+).

It is found in the cytoplasm. It catalyses the reaction 3-methyl-2-oxobutanoate + acetyl-CoA + H2O = (2S)-2-isopropylmalate + CoA + H(+). It participates in amino-acid biosynthesis; L-leucine biosynthesis; L-leucine from 3-methyl-2-oxobutanoate: step 1/4. In terms of biological role, catalyzes the condensation of the acetyl group of acetyl-CoA with 3-methyl-2-oxobutanoate (2-ketoisovalerate) to form 3-carboxy-3-hydroxy-4-methylpentanoate (2-isopropylmalate). The polypeptide is 2-isopropylmalate synthase (Pyrococcus furiosus (strain ATCC 43587 / DSM 3638 / JCM 8422 / Vc1)).